The following is a 425-amino-acid chain: Histidine--tRNA ligase (425 aa).

Belongs to the class-II aminoacyl-tRNA synthetase family. In terms of assembly, homodimer.

It is found in the cytoplasm. The catalysed reaction is tRNA(His) + L-histidine + ATP = L-histidyl-tRNA(His) + AMP + diphosphate + H(+). This is Histidine--tRNA ligase from Shewanella sp. (strain MR-7).